The sequence spans 416 residues: cAMP-dependent protein kinase regulatory subunit (416 aa).

The interval 2 to 183 is dimerization and phosphorylation; that stretch reads VSSLPKESQA…RLEKSIRNNF (182 aa). 11 positions are modified to phosphoserine: Ser3, Ser4, Ser9, Ser68, Ser70, Ser74, Ser77, Ser79, Ser81, Ser83, and Ser84. The interval 8–45 is dimerization/docking domain (D/D); sequence ESQAELQLFQNEINAANPSDFLQFSANYFNKRLEQQRA. The segment at 65–138 is disordered; the sequence is PEESFSRPQS…TSTPPLPMHF (74 aa). The segment covering 70–84 has biased composition (low complexity); it reads SRPQSAQSQSRSRSS. Position 129 is a phosphothreonine (Thr129). Ser130 is subject to Phosphoserine. Residues Thr131 and Thr144 each carry the phosphothreonine modification. Positions 142-146 match the Inhibitor sequence (IS) motif; that stretch reads RRTSV. Residue Ser145 is modified to Phosphoserine; by autocatalysis. The residue at position 147 (Ser147) is a Phosphoserine. Phosphothreonine is present on residues Thr150 and Thr160. Residues 184–301, Glu249, Arg258, 302–416, Glu368, and Arg377 contribute to the 3',5'-cyclic AMP site; these read LFNK…KSMP and VLKS…PTRH.

Belongs to the cAMP-dependent kinase regulatory chain family. The inactive holoenzyme of cAMP-dependent protein kinase is a tetramer, composed of 2 regulatory subunits (R, encoded by BCY1) and two catalytic subunits (C, encoded by the 3 partially redundant TPK1, TPK2, and TPK3 genes). Activation by cAMP causes dissociation of the holoenzyme, producing 2 active catalytic monomers C and a regulatory dimer R(2). Post-translationally, phosphorylated by YAK1 in response to glucose starvation. Phosphorylated by MCK1 at Thr-129 upon TOR complex 1 (TORC1) inhibition. Thr-129 phosphorylation activates BCY1 to inhibit PKA. TORC1 inhibits phosphorylation of RxxS/T sites but has no effect on Ser-145 phosphorylation. The phosphorylation sites can be clustered in several groups, all localized in the N-terminal part. The first cluster termed cluster I (CI) is located close to the N-terminus and includes Ser-3, Ser-4 and Ser-9. The second includes Ser-68, Ser-70, Ser-74, Ser-77, Ser-79, Ser-81, Ser-83, and Ser-84. This cluster of phosphorylation sites, termed cluster II (CII), is important for BCY1 cytoplasmic localization and function. The third cluster of phosphorylated residues consists of Thr-144, Ser-145, Ser-147, Thr-150, and Thr-160. This cluster falls within or near the so-called autoinhibitory domain where the catalytic subunit of PKA autophosphorylates the highly conserved Ser-145 to inhibit BCY1. A last cluster of phosphorylated residues included Thr-129, Ser-130, and Thr-131 and is termed cluster III (CIII). Sites in CIII (and to a lesser extent in CII) are hyperphosphorylated in response to rapamycin.

It localises to the cytoplasm. The protein resides in the nucleus. Functionally, regulatory subunit of the cyclic AMP-dependent protein kinase (PKA), an effector of the Ras/cAMP pathway. Inhibits PKA activity in the absence of cAMP. cAMP activates PKA and promotes growth and proliferation in response to good nutrient conditions. Together with ZDS1, provides a negative feedback control on the cell wall integrity-signaling pathway by acting as a negative regulator of MAP kinase SLT2/MPK1. This is cAMP-dependent protein kinase regulatory subunit (BCY1) from Saccharomyces cerevisiae (strain ATCC 204508 / S288c) (Baker's yeast).